Reading from the N-terminus, the 146-residue chain is Large ribosomal subunit protein uL11 (146 aa).

It belongs to the universal ribosomal protein uL11 family. As to quaternary structure, part of the ribosomal stalk of the 50S ribosomal subunit. Interacts with L10 and the large rRNA to form the base of the stalk. L10 forms an elongated spine to which L12 dimers bind in a sequential fashion forming a multimeric L10(L12)X complex. Post-translationally, one or more lysine residues are methylated.

Its function is as follows. Forms part of the ribosomal stalk which helps the ribosome interact with GTP-bound translation factors. This is Large ribosomal subunit protein uL11 from Treponema pallidum subsp. pallidum (strain SS14).